The primary structure comprises 308 residues: Ribosomal RNA small subunit methyltransferase H (308 aa).

Residues 35–37 (GGH), Asp55, Phe79, Asp100, and Gln107 contribute to the S-adenosyl-L-methionine site.

Belongs to the methyltransferase superfamily. RsmH family.

The protein localises to the cytoplasm. It carries out the reaction cytidine(1402) in 16S rRNA + S-adenosyl-L-methionine = N(4)-methylcytidine(1402) in 16S rRNA + S-adenosyl-L-homocysteine + H(+). Functionally, specifically methylates the N4 position of cytidine in position 1402 (C1402) of 16S rRNA. The protein is Ribosomal RNA small subunit methyltransferase H of Dechloromonas aromatica (strain RCB).